A 193-amino-acid polypeptide reads, in one-letter code: Peptidyl-tRNA hydrolase 1 (193 aa).

Y27 lines the tRNA pocket. The active-site Proton acceptor is H32. 3 residues coordinate tRNA: F80, N82, and N128.

This sequence belongs to the PTH family. In terms of assembly, monomer.

It localises to the cytoplasm. It catalyses the reaction an N-acyl-L-alpha-aminoacyl-tRNA + H2O = an N-acyl-L-amino acid + a tRNA + H(+). In terms of biological role, hydrolyzes ribosome-free peptidyl-tRNAs (with 1 or more amino acids incorporated), which drop off the ribosome during protein synthesis, or as a result of ribosome stalling. Catalyzes the release of premature peptidyl moieties from peptidyl-tRNA molecules trapped in stalled 50S ribosomal subunits, and thus maintains levels of free tRNAs and 50S ribosomes. This is Peptidyl-tRNA hydrolase 1 from Corynebacterium jeikeium (strain K411).